A 161-amino-acid chain; its full sequence is Transcription antitermination protein NusB (161 aa).

The segment at methionine 1 to serine 22 is disordered.

It belongs to the NusB family.

Involved in transcription antitermination. Required for transcription of ribosomal RNA (rRNA) genes. Binds specifically to the boxA antiterminator sequence of the ribosomal RNA (rrn) operons. This chain is Transcription antitermination protein NusB, found in Hydrogenovibrio crunogenus (strain DSM 25203 / XCL-2) (Thiomicrospira crunogena).